The sequence spans 37 residues: Potassium channel toxin alpha-KTx 2.14 (37 aa).

Cystine bridges form between cysteine 7-cysteine 28, cysteine 13-cysteine 33, and cysteine 17-cysteine 35.

The protein belongs to the short scorpion toxin superfamily. Potassium channel inhibitor family. Alpha-KTx 02 subfamily. Expressed by the venom gland.

The protein localises to the secreted. In terms of biological role, reversibly blocks hKv1.1/KCNA1 (50% inhibition of current at 1 uM). Seems not to be voltage-dependent. The polypeptide is Potassium channel toxin alpha-KTx 2.14 (Heteroctenus garridoi (Cuban scorpion)).